We begin with the raw amino-acid sequence, 475 residues long: Arginine biosynthesis bifunctional protein ArgJ 1, mitochondrial (475 aa).

T204, K233, T244, E331, N470, and T475 together coordinate substrate. The active-site Nucleophile is the T244.

Belongs to the ArgJ family. Heterodimer of an alpha and a beta chain. In terms of processing, the alpha and beta chains are autoproteolytically processed from a single precursor protein within the mitochondrion.

It is found in the mitochondrion matrix. The catalysed reaction is N(2)-acetyl-L-ornithine + L-glutamate = N-acetyl-L-glutamate + L-ornithine. It catalyses the reaction L-glutamate + acetyl-CoA = N-acetyl-L-glutamate + CoA + H(+). It functions in the pathway amino-acid biosynthesis; L-arginine biosynthesis; L-ornithine and N-acetyl-L-glutamate from L-glutamate and N(2)-acetyl-L-ornithine (cyclic): step 1/1. It participates in amino-acid biosynthesis; L-arginine biosynthesis; N(2)-acetyl-L-ornithine from L-glutamate: step 1/4. In terms of biological role, catalyzes two activities which are involved in the cyclic version of arginine biosynthesis: the synthesis of acetylglutamate from glutamate and acetyl-CoA, and of ornithine by transacetylation between acetylornithine and glutamate. The polypeptide is Arginine biosynthesis bifunctional protein ArgJ 1, mitochondrial (Botryotinia fuckeliana (strain B05.10) (Noble rot fungus)).